Reading from the N-terminus, the 534-residue chain is Protein tweety homolog 2 (534 aa).

The Extracellular portion of the chain corresponds to 1 to 44 (MAAARVEYIAPWWVYWLHNFPHVDLSLRQKSPDFNPKDPGYQQT). Residues 45-65 (LLFVALIVALCAAVNLLFVSV) form a helical membrane-spanning segment. Topologically, residues 66-87 (YLICLCCCKKEDETETKKTSSC) are cytoplasmic. The helical transmembrane segment at 88 to 108 (CVTWTAAVSGLLCCAAVGIGF) threads the bilayer. At 109 to 213 (YGNSETNDGV…QTSTIEYYRW (105 aa)) the chain is on the extracellular side. Residues glutamate 113 and aspartate 116 each coordinate Ca(2+). The N-linked (GlcNAc...) asparagine glycan is linked to asparagine 129. An RGD motif is present at residues 164–166 (RGD). A glycan (N-linked (GlcNAc...) asparagine) is linked at asparagine 197. A helical membrane pass occupies residues 214 to 234 (LSYLLLFISYVVICLVTCVGL). Residues 235-240 (AKKSKC) are Cytoplasmic-facing. Residues 241–261 (LLLIMLCFGLIALMLSWTSLA) form a helical membrane-spanning segment. Residues 262 to 388 (LETSSAMGTS…IGICYDGVEG (127 aa)) lie on the Extracellular side of the membrane. Intrachain disulfides connect cysteine 274/cysteine 382 and cysteine 300/cysteine 367. Asparagine 283 and asparagine 352 each carry an N-linked (GlcNAc...) asparagine glycan. The chain crosses the membrane as a helical span at residues 389–409 (MLYLGLFSLLAALAFTAMVCA). The Cytoplasmic segment spans residues 410 to 534 (MPQAWKHLEA…SSIYSNVFPA (125 aa)).

It belongs to the tweety family. In terms of assembly, forms cis-homodimers in the presence of Ca(+2) and forms monomers and trans-dimers in the absence of Ca(2+).

Its subcellular location is the cell membrane. The catalysed reaction is chloride(in) = chloride(out). The enzyme catalyses L-glutamate(out) = L-glutamate(in). Functionally, may act as a calcium-independent, swelling-dependent volume-regulated anion channel (VRAC-swell) which plays a pivotal role in the process of regulatory volume decrease (RVD) in the brain through the efflux of anions like chloride and organic osmolytes like glutamate. Probable large-conductance Ca(2+)-activated chloride channel. In Xenopus tropicalis (Western clawed frog), this protein is Protein tweety homolog 2 (ttyh2).